The sequence spans 302 residues: O-antigen biosynthesis glycosyltransferase WbnK (302 aa).

The protein belongs to the glycosyltransferase 11 family.

The catalysed reaction is beta-D-Gal-(1-&gt;3)-alpha-D-GalNAc-(1-&gt;3)-alpha-D-GalNAc-di-trans,octa-cis-undecaprenyl diphosphate + GDP-beta-L-fucose = alpha-L-Fuc-(1-&gt;2)-beta-D-Gal-(1-&gt;3)-alpha-D-GalNAc-(1-&gt;3)-alpha-D-GalNAc-di-trans,octa-cis-undecaprenyl diphosphate + GDP + H(+). Its pathway is bacterial outer membrane biogenesis; LPS O-antigen biosynthesis. Functionally, involved in the assembly of the O-repeating unit during O-antigen biosynthesis. This Escherichia coli protein is O-antigen biosynthesis glycosyltransferase WbnK.